The sequence spans 158 residues: C-type lectin lectoxin-Enh5 (158 aa).

An N-terminal signal peptide occupies residues M1–G23. 3 disulfide bridges follow: C26–C37, C54–C154, and C129–C146. The C-type lectin domain maps to R33 to Q155. The short motif at E119–N121 is the Mannose-binding element. 3 residues coordinate Ca(2+): E127, N142, and D143.

This sequence belongs to the true venom lectin family. As to expression, expressed by the venom gland.

It is found in the secreted. In terms of biological role, mannose-binding lectin which recognizes specific carbohydrate structures and agglutinates a variety of animal cells by binding to cell-surface glycoproteins and glycolipids. May be a calcium-dependent lectin. The polypeptide is C-type lectin lectoxin-Enh5 (Pseudoferania polylepis (Macleay's water snake)).